A 380-amino-acid polypeptide reads, in one-letter code: MITVNEGSVTIRVPDFSKVSARAPVFYNPAMEFNRDVSVVALQVFQRLLGGEISVADTFSGSGIRAIRYLVEVEGVSEAFANDINPLAVECIKNNSVINSVSPEVSREDASIFLRSNHGRFDVIDIDPFGTPAPFMDSAAASARNNSLLAVTATDTSSLCGTYIKPCLRKYSSRPLKTEYCHETGLRILAGFTAMNLARYRKAASVLLSHSSQHYMRLYIRVRRGARRADESIRNIGFMLHCFRCLHHEHVNGFAPLKRECPHCGAEMDVAGPLWVGDIQDSKFIGEMIGEVENKELNTAGDVLKLLKGCLDEAGMPPGFYDIHEVCSKLGRSAPPLRDVMDGLEAAGFRVSRTHIRPTGIRTDAGIGEIEEVLAGLMPE.

Residues 2-374 enclose the Trm1 methyltransferase domain; the sequence is ITVNEGSVTI…AGIGEIEEVL (373 aa). Residues Arg-35, Arg-65, Asp-83, Asp-109, and Ala-110 each coordinate S-adenosyl-L-methionine. Cys-242, Cys-245, Cys-261, and Cys-264 together coordinate Zn(2+).

This sequence belongs to the class I-like SAM-binding methyltransferase superfamily. Trm1 family.

The enzyme catalyses guanosine(26) in tRNA + 2 S-adenosyl-L-methionine = N(2)-dimethylguanosine(26) in tRNA + 2 S-adenosyl-L-homocysteine + 2 H(+). Its function is as follows. Dimethylates a single guanine residue at position 26 of a number of tRNAs using S-adenosyl-L-methionine as donor of the methyl groups. The polypeptide is tRNA (guanine(26)-N(2))-dimethyltransferase (Methanothermobacter thermautotrophicus (strain ATCC 29096 / DSM 1053 / JCM 10044 / NBRC 100330 / Delta H) (Methanobacterium thermoautotrophicum)).